Reading from the N-terminus, the 153-residue chain is MEPLYQAGSILMTVNTLQGKKMIESGLQSGDFSLSQSWPSCLPPPADLEILQQKVAGVQRELEDFKKEALKSIHYLEDAFCEMNGALVQQEEQAARVRQRLREEEDRGIVRNKVLTFLLPREKQLREHCKRLEDLLLDRGRDALRATKKSQAD.

Positions 46–109 form a coiled coil; the sequence is ADLEILQQKV…RLREEEDRGI (64 aa).

The sequence is that of Coiled-coil domain-containing protein 182 (CCDC182) from Homo sapiens (Human).